Reading from the N-terminus, the 684-residue chain is Hydroxyproline O-galactosyltransferase GALT2 (684 aa).

Residues 1-22 are Cytoplasmic-facing; sequence MKRVKSESFRGVYSSRRFKLSH. A helical; Signal-anchor for type II membrane protein transmembrane segment spans residues 23–43; that stretch reads FLLAIAGFYLVFLAFKFPHFI. Topologically, residues 44-684 are lumenal; it reads EMVAMLSGDT…KGRPQCCNFR (641 aa). A disordered region spans residues 80 to 102; the sequence is KLEDEDHQSGPSTTQKVSPEEKI. N-linked (GlcNAc...) asparagine glycans are attached at residues asparagine 103, asparagine 127, and asparagine 162. One can recognise a Galectin domain in the interval 191-405; it reads RIMLLPCGLA…DVDIHSIHAT (215 aa). N-linked (GlcNAc...) asparagine glycosylation is found at asparagine 524 and asparagine 632.

Belongs to the glycosyltransferase 31 family. Requires Mn(2+) as cofactor. In terms of tissue distribution, expressed in stems and at lower levels in cauline leaves and siliques.

The protein resides in the golgi apparatus membrane. It participates in protein modification; protein glycosylation. In terms of biological role, possesses hydroxyproline O-galactosyltransferase activity. Transfers galactose from UDP-galactose to hydroxyproline residues in the arabinogalactan proteins (AGPs). Is specific for AGPs containing non-contiguous peptidyl hydroxyproline residues. Utilizes UDP-galactose solely as sugar donor. The addition of galactose onto the peptidyl hydroxyproline residues in AGP core proteins represents the first committed step in arabinogalactan polysaccharide addition. AGP glycans play essential roles in both vegetative and reproductive plant growth. This chain is Hydroxyproline O-galactosyltransferase GALT2, found in Arabidopsis thaliana (Mouse-ear cress).